The sequence spans 147 residues: Nucleoside diphosphate kinase (147 aa).

ATP is bound by residues lysine 9, arginine 85, threonine 91, arginine 102, and asparagine 112. The active-site Pros-phosphohistidine intermediate is histidine 115.

It belongs to the NDK family. The cofactor is Mg(2+).

It carries out the reaction a 2'-deoxyribonucleoside 5'-diphosphate + ATP = a 2'-deoxyribonucleoside 5'-triphosphate + ADP. The catalysed reaction is a ribonucleoside 5'-diphosphate + ATP = a ribonucleoside 5'-triphosphate + ADP. Major role in the synthesis of nucleoside triphosphates other than ATP. The ATP gamma phosphate is transferred to the NDP beta phosphate via a ping-pong mechanism, using a phosphorylated active-site intermediate. In Encephalitozoon cuniculi (strain GB-M1) (Microsporidian parasite), this protein is Nucleoside diphosphate kinase (NDK1).